The primary structure comprises 31 residues: Cytochrome b6-f complex subunit 6 (31 aa).

A helical membrane pass occupies residues 4–24 (ITSYFGFLLAALTITSALFIG).

The protein belongs to the PetL family. In terms of assembly, the 4 large subunits of the cytochrome b6-f complex are cytochrome b6, subunit IV (17 kDa polypeptide, PetD), cytochrome f and the Rieske protein, while the 4 small subunits are PetG, PetL, PetM and PetN. The complex functions as a dimer.

It localises to the plastid. The protein resides in the chloroplast thylakoid membrane. Its function is as follows. Component of the cytochrome b6-f complex, which mediates electron transfer between photosystem II (PSII) and photosystem I (PSI), cyclic electron flow around PSI, and state transitions. PetL is important for photoautotrophic growth as well as for electron transfer efficiency and stability of the cytochrome b6-f complex. This Hamamelis virginiana (Witch-hazel) protein is Cytochrome b6-f complex subunit 6.